Reading from the N-terminus, the 635-residue chain is 1-deoxy-D-xylulose-5-phosphate synthase (635 aa).

Thiamine diphosphate contacts are provided by residues His79 and 120 to 122 (GHS). Residue Asp151 coordinates Mg(2+). Thiamine diphosphate-binding positions include 152 to 153 (GA), Asn182, Tyr291, and Glu372. Asn182 lines the Mg(2+) pocket.

The protein belongs to the transketolase family. DXPS subfamily. In terms of assembly, homodimer. It depends on Mg(2+) as a cofactor. Thiamine diphosphate is required as a cofactor.

The catalysed reaction is D-glyceraldehyde 3-phosphate + pyruvate + H(+) = 1-deoxy-D-xylulose 5-phosphate + CO2. It functions in the pathway metabolic intermediate biosynthesis; 1-deoxy-D-xylulose 5-phosphate biosynthesis; 1-deoxy-D-xylulose 5-phosphate from D-glyceraldehyde 3-phosphate and pyruvate: step 1/1. Its function is as follows. Catalyzes the acyloin condensation reaction between C atoms 2 and 3 of pyruvate and glyceraldehyde 3-phosphate to yield 1-deoxy-D-xylulose-5-phosphate (DXP). The sequence is that of 1-deoxy-D-xylulose-5-phosphate synthase from Xylella fastidiosa (strain M23).